Here is a 495-residue protein sequence, read N- to C-terminus: OTU domain-containing protein CG3251 (495 aa).

One can recognise an OTU domain in the interval 29–150 (LFRKHMLGDA…MGHFETVLTM (122 aa)). Positions 302 to 364 (NFKVGAKCQV…HPLPPDEFKA (63 aa)) constitute a Tudor domain. The segment covering 375 to 389 (LHNSQMGRQSVQGDQ) has biased composition (polar residues). The interval 375 to 404 (LHNSQMGRQSVQGDQQGFVPDPMPGTAPSM) is disordered. Residues 395 to 404 (DPMPGTAPSM) show a composition bias toward pro residues.

Its function is as follows. Putative OTU-type deubiquitinase. Catalytically inactive towards all diubiquitin molecules and long K48- and K63- linked ubiquitin chains in vitro. Potential modulator of apoptosis. This Drosophila melanogaster (Fruit fly) protein is OTU domain-containing protein CG3251.